Consider the following 199-residue polypeptide: Small ribosomal subunit protein uS4 (199 aa).

Residues 91–154 enclose the S4 RNA-binding domain; that stretch reads SRLDNVVYRL…KDLIIVKEAL (64 aa).

It belongs to the universal ribosomal protein uS4 family. Part of the 30S ribosomal subunit. Contacts protein S5. The interaction surface between S4 and S5 is involved in control of translational fidelity.

In terms of biological role, one of the primary rRNA binding proteins, it binds directly to 16S rRNA where it nucleates assembly of the body of the 30S subunit. Functionally, with S5 and S12 plays an important role in translational accuracy. The protein is Small ribosomal subunit protein uS4 of Phytoplasma mali (strain AT).